We begin with the raw amino-acid sequence, 156 residues long: ATP synthase subunit b (156 aa).

A helical membrane pass occupies residues leucine 7–phenylalanine 29.

The protein belongs to the ATPase B chain family. In terms of assembly, F-type ATPases have 2 components, F(1) - the catalytic core - and F(0) - the membrane proton channel. F(1) has five subunits: alpha(3), beta(3), gamma(1), delta(1), epsilon(1). F(0) has three main subunits: a(1), b(2) and c(10-14). The alpha and beta chains form an alternating ring which encloses part of the gamma chain. F(1) is attached to F(0) by a central stalk formed by the gamma and epsilon chains, while a peripheral stalk is formed by the delta and b chains.

The protein localises to the cell inner membrane. Functionally, f(1)F(0) ATP synthase produces ATP from ADP in the presence of a proton or sodium gradient. F-type ATPases consist of two structural domains, F(1) containing the extramembraneous catalytic core and F(0) containing the membrane proton channel, linked together by a central stalk and a peripheral stalk. During catalysis, ATP synthesis in the catalytic domain of F(1) is coupled via a rotary mechanism of the central stalk subunits to proton translocation. Its function is as follows. Component of the F(0) channel, it forms part of the peripheral stalk, linking F(1) to F(0). This Dichelobacter nodosus (strain VCS1703A) protein is ATP synthase subunit b.